The primary structure comprises 576 residues: Ferroportin (576 aa).

The Cytoplasmic segment spans residues 1–23 (MPKAGEQARQGGCCGSLANYLTS). The chain crosses the membrane as a helical span at residues 24 to 53 (AKFLLYLGHSLSTWGDRMWHFAVSVFLVEL). Residues aspartate 39 and histidine 43 each coordinate Fe cation. Topologically, residues 54–57 (YGNS) are extracellular. Residues 58-84 (LLLTAVYGLVVAGSVLVLGAIIGDWVD) form a helical membrane-spanning segment. Topologically, residues 85 to 87 (KNA) are cytoplasmic. The helical transmembrane segment at 88-118 (RLKVAQTSLVVQNVSVILCGIILMMVFLHKN) threads the bilayer. The Extracellular segment spans residues 119–126 (ELLTMYHG). The chain crosses the membrane as a helical span at residues 127–162 (WVLTFCYILIITIADVANLASTATAITIQRDWIVVV). Over 163-164 (AG) the chain is Cytoplasmic. Residues 165–195 (GDRSKLADMNATIRRIDQLTNILAPMAVGQI) traverse the membrane as a helical segment. Residues 196-202 (MTFGSAV) are Extracellular-facing. The helical transmembrane segment at 203–229 (IGCGFISGWNLVSMCVEYFLLWKVYQK) threads the bilayer. Residues 230–306 (TPALAVKAAL…DGWVSYYNQS (77 aa)) lie on the Cytoplasmic side of the membrane. A helical transmembrane segment spans residues 307 to 333 (VFLAGMGLAFLYMTVLGFDCITTGYAY). Residue cysteine 326 participates in Fe cation binding. At 334-338 (TQGLS) the chain is on the extracellular side. The helical transmembrane segment at 339–366 (GSILSILMGASAITGIMGTVAFTWLRRK) threads the bilayer. Residues 367 to 368 (CG) are Cytoplasmic-facing. A helical transmembrane segment spans residues 369–391 (LVRTGLISGFAQLSCLILCVISV). The Extracellular portion of the chain corresponds to 392-458 (FMPGSPLDLS…ETTPKSVPII (67 aa)). N-linked (GlcNAc...) asparagine glycosylation occurs at asparagine 439. A helical membrane pass occupies residues 459 to 488 (SVSLLFAGVIAARIGLWSFDLTVTQLLQEN). At 489-493 (VIESE) the chain is on the cytoplasmic side. A helical transmembrane segment spans residues 494-518 (RGIINGVQNSMNYLLDLLHFIMVIL). Histidine 512 provides a ligand contact to Fe cation. Residues 519 to 521 (APN) lie on the Extracellular side of the membrane. Residues 522 to 547 (PEAFGLLVLISVSFVAMGHIMYFRFA) form a helical membrane-spanning segment. Residues 548–576 (QKTLGSKLFACGADDEEVTNENQANTSVV) are Cytoplasmic-facing.

Belongs to the ferroportin (FP) (TC 2.A.100) family. SLC40A subfamily. Identified in a complex with STOM. Interacts with HAMP; affinity of the peptide hormone HAMP for SLC40A1 increases by 80-fold in the presence of iron and the interaction promotes SLC40A1 ubiquitination and degradation. Part of a complex composed of SLC40A1/ferroportin, TF/transferrin and HEPH/hephaestin that transfers iron from cells to transferrin. Polyubiquitinated by RNF217; leading to proteasomal degradation. Under conditions of high systemic iron levels, both the hormone peptide hepcidin/HAMP and holo(iron bound)-transferrin/TF induce the ubiquitination, internalization and proteasomal degradation of SLC40A1 to control iron release from cells.

The protein localises to the cell membrane. The protein resides in the basolateral cell membrane. The catalysed reaction is Fe(2+)(in) = Fe(2+)(out). Its activity is regulated as follows. During elevated serum iron levels, liver-derived hepcidin/HAMP negatively regulates cell surface ferroportin/SLC40A1 by inducing its ubiquitination, internalization, and degradation. Indeed, hepcidin/HAMP affinity towards ferroportin/SLC40A1 increases by 80-fold in the presence of iron. Transports Fe(2+) from the inside of a cell to the outside of the cell, playing a key role for maintaining systemic iron homeostasis. Transports iron from intestinal, splenic, hepatic cells, macrophages and erythrocytes into the blood to provide iron to other tissues. Controls therefore dietary iron uptake, iron recycling by macrophages and erythrocytes, and release of iron stores in hepatocytes. When iron is in excess in serum, circulating HAMP/hepcidin levels increase resulting in a degradation of SLC40A1, thus limiting the iron efflux to plasma. This chain is Ferroportin, found in Canis lupus familiaris (Dog).